The primary structure comprises 574 residues: Pyruvate kinase PKLR (574 aa).

Residues S2, S19, S26, and S43 each carry the phosphoserine modification. R116 is a substrate binding site. Positions 118, 120, 156, and 157 each coordinate K(+). N118–H121 serves as a coordination point for ATP. Positions 163 and 250 each coordinate ATP. S292 carries the phosphoserine modification. A substrate-binding site is contributed by K313. Residue E315 coordinates Mn(2+). 3 residues coordinate substrate: G338, D339, and T371. D339 serves as a coordination point for Mn(2+). Residues T475 to S480, W525, R532, and R559 to Y564 each bind beta-D-fructose 1,6-bisphosphate.

It belongs to the pyruvate kinase family. Homotetramer. It depends on Mg(2+) as a cofactor. Mn(2+) serves as cofactor. The cofactor is K(+).

It catalyses the reaction pyruvate + ATP = phosphoenolpyruvate + ADP + H(+). The protein operates within carbohydrate degradation; glycolysis; pyruvate from D-glyceraldehyde 3-phosphate: step 5/5. Allosterically activated by fructose 1,6-bisphosphate. Its function is as follows. Pyruvate kinase that catalyzes the conversion of phosphoenolpyruvate to pyruvate with the synthesis of ATP, and which plays a key role in glycolysis. This Rattus norvegicus (Rat) protein is Pyruvate kinase PKLR (Pklr).